The chain runs to 717 residues: Photosystem I P700 chlorophyll a apoprotein A1 (717 aa).

A run of 8 helical transmembrane segments spans residues 59–82 (VFRA…FHGA), 145–168 (LYCT…FHYH), 184–208 (LNHH…HVSL), 280–298 (TAHH…GHMY), 335–358 (WHAQ…HHMY), 374–400 (LSLF…IFMV), 422–444 (AIVS…LYIH), and 520–538 (FLVH…LILL). The [4Fe-4S] cluster site is built by C562 and C571. 2 helical membrane-spanning segments follow: residues 578–599 (HVFL…HFSW) and 653–675 (LSAY…MFLF). Residue H664 participates in chlorophyll a' binding. The chlorophyll a site is built by M672 and Y680. W681 is a phylloquinone binding site. Residues 713-717 (AVGVA) form a helical membrane-spanning segment.

The protein belongs to the PsaA/PsaB family. In terms of assembly, the PsaA/B heterodimer binds the P700 chlorophyll special pair and subsequent electron acceptors. PSI consists of a core antenna complex that captures photons, and an electron transfer chain that converts photonic excitation into a charge separation. The eukaryotic PSI reaction center is composed of at least 11 subunits. P700 is a chlorophyll a/chlorophyll a' dimer, A0 is one or more chlorophyll a, A1 is one or both phylloquinones and FX is a shared 4Fe-4S iron-sulfur center. is required as a cofactor.

The protein resides in the plastid. It is found in the chloroplast thylakoid membrane. The catalysed reaction is reduced [plastocyanin] + hnu + oxidized [2Fe-2S]-[ferredoxin] = oxidized [plastocyanin] + reduced [2Fe-2S]-[ferredoxin]. Functionally, psaA and PsaB bind P700, the primary electron donor of photosystem I (PSI), as well as the electron acceptors A0, A1 and FX. PSI is a plastocyanin-ferredoxin oxidoreductase, converting photonic excitation into a charge separation, which transfers an electron from the donor P700 chlorophyll pair to the spectroscopically characterized acceptors A0, A1, FX, FA and FB in turn. Oxidized P700 is reduced on the lumenal side of the thylakoid membrane by plastocyanin. The sequence is that of Photosystem I P700 chlorophyll a apoprotein A1 from Cycas revoluta (Sago palm).